Here is a 462-residue protein sequence, read N- to C-terminus: GTPase Der (462 aa).

EngA-type G domains follow at residues 3–170 (ITIA…TSQK) and 201–372 (IKIA…FNSI). GTP-binding positions include 9-16 (GRTNVGKS), 57-61 (DTPGI), 122-125 (NKIE), 207-214 (GKPNVGKS), 254-258 (DTAGI), and 319-322 (NKND). Positions 373–457 (KKIHTSKITE…SIVLYFKSSK (85 aa)) constitute a KH-like domain.

This sequence belongs to the TRAFAC class TrmE-Era-EngA-EngB-Septin-like GTPase superfamily. EngA (Der) GTPase family. In terms of assembly, associates with the 50S ribosomal subunit.

In terms of biological role, GTPase that plays an essential role in the late steps of ribosome biogenesis. The sequence is that of GTPase Der from Buchnera aphidicola subsp. Baizongia pistaciae (strain Bp).